The sequence spans 430 residues: MDSASADASVTGSGNAKGSSAERVNGGGKFYKLEILVSDPQKRAGEAGLGPYVSYQISTRTDNPSYHGNQKASFDDIIVVHRRYNDVVLLHDILQNDHPTCIIPPLPDKKVLQYIAGDRFGRRFTQRRCHSLQNFLRRVSQHPILSTSKVLEIFLVGNEWDTYRKNIAGTLQNAQKEDVTDAVMNAFKKVHNQNEEFTEIRDRSDKLDNSVNRINKVFHRVVKKNEAIIEDYSKLGLTLQELQELVSSDNDKLADSLKVFIEGVTQFSYGLQDLNMFIDYEYLIDLKDLSHYIGSMKQTMRLKDQKQIDYEELSDYLTKSIKEKNNLISGYGGGNFLTSKLEELAGYNQEASRRDKINKLESTISSLTTELETAKKVADTFEQETLKEVKKFEEIKNDELKISLNNLADENIKFYERMLETWEKVDQSLR.

Over residues 1-18 the composition is skewed to polar residues; the sequence is MDSASADASVTGSGNAKG. Residues 1 to 22 form a disordered region; the sequence is MDSASADASVTGSGNAKGSSAE. Positions 33 to 162 constitute a PX domain; the sequence is LEILVSDPQK…IFLVGNEWDT (130 aa). A 1,2-diacyl-sn-glycero-3-phospho-(1D-myo-inositol-3-phosphate) contacts are provided by R83, K109, and R128. Residues 351-414 adopt a coiled-coil conformation; sequence ASRRDKINKL…NNLADENIKF (64 aa).

This sequence belongs to the sorting nexin family.

It is found in the cytoplasm. Its subcellular location is the cytosol. The protein localises to the preautophagosomal structure membrane. The protein resides in the endosome membrane. In terms of biological role, sorting nexin, involved in the separation or division of vacuoles throughout the entire life cycle of the cells. Involved in retrieval of late-Golgi SNAREs from post-Golgi endosomes to the trans-Golgi network, for cytoplasm to vacuole transport (Cvt), and autophagy of large cargos including mitophagy, pexophagy and glycophagy. The protein is Sorting nexin-4 (SNX4) of Candida glabrata (strain ATCC 2001 / BCRC 20586 / JCM 3761 / NBRC 0622 / NRRL Y-65 / CBS 138) (Yeast).